The primary structure comprises 337 residues: MANGQISPQRAVTKPQSWWLTSEPRPSLMLQLPKPSPSAKPCASVEEAYEICRQVTAQYAKTFYLGTLLMPPAKRRAIWAIYLWCRRTDELVDGPQAATTTPETLDHWERRLEGIFAGQPQDDADVALVDTLETFPLDIQPFRDMIAGQRMDLYRSRYQTFEELDLYCYRVAGTVGLMSSAVLGVDTGNGQAPWQPDAVYIPQEEAIALGVANQLTNILRDVGEDVERGRIYLPLEDLERFNYSEQDLLNGVNDDRWRSLMKFEIDRARHYFEDAERGIRALNRDARWPVWTALMLYKGILDVIEANNYNVFNRRAYVPTPKKLLYLPVAWLRAQVL.

Belongs to the phytoene/squalene synthase family. ATP serves as cofactor. Mn(2+) is required as a cofactor. The cofactor is Mg(2+).

It carries out the reaction 2 (2E,6E,10E)-geranylgeranyl diphosphate = 15-cis-phytoene + 2 diphosphate. It functions in the pathway carotenoid biosynthesis; phytoene biosynthesis. Involved in the biosynthesis of carotenoids. Catalyzes the condensation of two molecules of geranylgeranyl diphosphate (GGPP) to give prephytoene diphosphate (PPPP) and the subsequent rearrangement of the cyclopropylcarbinyl intermediate to yield 15-cis-phytoene. The sequence is that of 15-cis-phytoene synthase (crtB) from Synechocystis sp. (strain ATCC 27184 / PCC 6803 / Kazusa).